The primary structure comprises 311 residues: tRNA N6-adenosine threonylcarbamoyltransferase (311 aa).

Histidine 108 and histidine 112 together coordinate Fe cation. Residues 130 to 134 (LVSGG), aspartate 163, glycine 176, aspartate 180, and asparagine 270 contribute to the substrate site. Residue aspartate 294 participates in Fe cation binding.

Belongs to the KAE1 / TsaD family. The cofactor is Fe(2+).

It localises to the cytoplasm. The catalysed reaction is L-threonylcarbamoyladenylate + adenosine(37) in tRNA = N(6)-L-threonylcarbamoyladenosine(37) in tRNA + AMP + H(+). Its function is as follows. Required for the formation of a threonylcarbamoyl group on adenosine at position 37 (t(6)A37) in tRNAs that read codons beginning with adenine. Is involved in the transfer of the threonylcarbamoyl moiety of threonylcarbamoyl-AMP (TC-AMP) to the N6 group of A37, together with TsaE and TsaB. TsaD likely plays a direct catalytic role in this reaction. The protein is tRNA N6-adenosine threonylcarbamoyltransferase of Metamycoplasma arthritidis (strain 158L3-1) (Mycoplasma arthritidis).